Consider the following 757-residue polypeptide: Alcohol dehydrogenase (quinone), dehydrogenase subunit (757 aa).

The N-terminal stretch at 1–34 (MTSGLLTPIKVTKKRLLSCAAALAFSAAVPVAFA) is a signal peptide. Q35 is modified (pyrrolidone carboxylic acid). Residue E95 coordinates pyrroloquinoline quinone. C141 and C142 are joined by a disulfide. Pyrroloquinoline quinone is bound at residue R147. A Ca(2+)-binding site is contributed by E215. T277 contributes to the pyrroloquinoline quinone binding site. Ca(2+) is bound by residues N297 and D342. The active-site Proton acceptor is D342. Pyrroloquinoline quinone contacts are provided by K369 and I588. The 80-residue stretch at 640 to 719 (ARQKDGYFMY…DIRNFIVKRA (80 aa)) folds into the Cytochrome c domain. Heme c contacts are provided by C653, C656, H657, and M696. Positions 726–757 (EVKARENSTGVPNDQFLNVPQSTADVPTADHP) are disordered. Residues 732–750 (NSTGVPNDQFLNVPQSTAD) are compositionally biased toward polar residues.

It belongs to the bacterial PQQ dehydrogenase family. In terms of assembly, the alcohol dehydrogenase multicomponent enzyme system is composed of a dehydrogenase subunit I (AdhA), a cytochrome c subunit II (AdhB) and a subunit III (AdhS). Requires pyrroloquinoline quinone as cofactor. Ca(2+) is required as a cofactor. It depends on heme c as a cofactor.

The protein resides in the cell membrane. It catalyses the reaction ethanol + a ubiquinone = a ubiquinol + acetaldehyde. Its activity is regulated as follows. 2,6-dichloro-4-dicyanovinylphenol (PC16) and antimycin A inhibit ubiquinol oxidation activity more selectively than the ubiquinone reductase activity. Functionally, dehydrogenase component of the alcohol dehydrogenase multicomponent enzyme system which is involved in the production of acetic acid and in the ethanol oxidase respiratory chain. Quinohemoprotein alcohol dehydrogenase (ADH) catalyzes the oxidation of ethanol to acetaldehyde by transferring electrons to the ubiquinone embedded in the membrane phospholipids. The electrons transfer from ethanol to membranous ubiquinone occurs from pyrroloquinoline quinone (PQQ) to one heme c in subunit I (AdhA), and finally to two heme c in subunit II (AdhB). Besides ubiquinone reduction, ADH also has a ubiquinol (QH2) oxidation reaction which mediates electron transfer from ubiquinol to the non-energy generating bypass oxidase system. The electrons transfer occurs from ubiquinol (QH2) to the additional heme c within subunit II (AdhB). Also able to use quinone analogs such as 2,3-dimethoxy-5-methyl-6-n-decyl-1,4-benzoquinone (DB) and 2,3-dimethoxy-5-methyl-6-n-pentyl-1,4-benzoquinone (PB). The protein is Alcohol dehydrogenase (quinone), dehydrogenase subunit of Gluconobacter oxydans (strain 621H) (Gluconobacter suboxydans).